The primary structure comprises 212 residues: Deoxyribose-phosphate aldolase (212 aa).

Asp-89 serves as the catalytic Proton donor/acceptor. Lys-151 acts as the Schiff-base intermediate with acetaldehyde in catalysis. The active-site Proton donor/acceptor is the Lys-180.

This sequence belongs to the DeoC/FbaB aldolase family. DeoC type 1 subfamily.

The protein localises to the cytoplasm. It catalyses the reaction 2-deoxy-D-ribose 5-phosphate = D-glyceraldehyde 3-phosphate + acetaldehyde. The protein operates within carbohydrate degradation; 2-deoxy-D-ribose 1-phosphate degradation; D-glyceraldehyde 3-phosphate and acetaldehyde from 2-deoxy-alpha-D-ribose 1-phosphate: step 2/2. In terms of biological role, catalyzes a reversible aldol reaction between acetaldehyde and D-glyceraldehyde 3-phosphate to generate 2-deoxy-D-ribose 5-phosphate. The sequence is that of Deoxyribose-phosphate aldolase from Clostridium botulinum (strain ATCC 19397 / Type A).